Reading from the N-terminus, the 156-residue chain is Superoxide dismutase [Cu-Zn] 2 (156 aa).

Cu cation-binding residues include histidine 47, histidine 49, and histidine 64. An intrachain disulfide couples cysteine 58 to cysteine 147. Zn(2+) is bound by residues histidine 64, histidine 72, histidine 81, and aspartate 84. Histidine 121 is a Cu cation binding site.

The protein belongs to the Cu-Zn superoxide dismutase family. Homodimer. Cu cation serves as cofactor. Zn(2+) is required as a cofactor.

Its subcellular location is the cytoplasm. The catalysed reaction is 2 superoxide + 2 H(+) = H2O2 + O2. Its function is as follows. Destroys radicals which are normally produced within the cells and which are toxic to biological systems. The polypeptide is Superoxide dismutase [Cu-Zn] 2 (SODCC.2) (Mesembryanthemum crystallinum (Common ice plant)).